The primary structure comprises 443 residues: UDP-N-acetylmuramate--L-alanine ligase (443 aa).

110–116 (GAHGKTS) serves as a coordination point for ATP.

The protein belongs to the MurCDEF family.

The protein localises to the cytoplasm. It catalyses the reaction UDP-N-acetyl-alpha-D-muramate + L-alanine + ATP = UDP-N-acetyl-alpha-D-muramoyl-L-alanine + ADP + phosphate + H(+). It participates in cell wall biogenesis; peptidoglycan biosynthesis. Its function is as follows. Cell wall formation. This Streptococcus gordonii (strain Challis / ATCC 35105 / BCRC 15272 / CH1 / DL1 / V288) protein is UDP-N-acetylmuramate--L-alanine ligase.